A 165-amino-acid chain; its full sequence is Protein SprT (165 aa).

The SprT-like domain occupies 10–157 (EACYRQAEDF…YCRRCKATLV (148 aa)). Histidine 69 is a Zn(2+) binding site. The active site involves glutamate 70. Histidine 73 is a Zn(2+) binding site.

The protein belongs to the SprT family. It depends on Zn(2+) as a cofactor.

The protein resides in the cytoplasm. This chain is Protein SprT, found in Pseudomonas paraeruginosa (strain DSM 24068 / PA7) (Pseudomonas aeruginosa (strain PA7)).